Here is a 543-residue protein sequence, read N- to C-terminus: Carboxypeptidase Y homolog A (543 aa).

The signal sequence occupies residues 1–17 (MKFLTTGLLATAALAAA). A propeptide spanning residues 18-124 (QEQHVLQAED…KLHNYDLRVK (107 aa)) is cleaved from the precursor. Cystine bridges form between Cys-179–Cys-419, Cys-313–Cys-327, Cys-337–Cys-360, Cys-344–Cys-353, and Cys-382–Cys-389. Asn-210 carries N-linked (GlcNAc...) asparagine glycosylation. Ser-266 is a catalytic residue. Asp-458 is an active-site residue. An N-linked (GlcNAc...) asparagine glycan is attached at Asn-509. His-520 is a catalytic residue.

This sequence belongs to the peptidase S10 family.

The protein resides in the vacuole. It carries out the reaction Release of a C-terminal amino acid with broad specificity.. Its function is as follows. Vacuolar carboxypeptidase involved in degradation of small peptides. Digests preferentially peptides containing an aliphatic or hydrophobic residue in P1' position, as well as methionine, leucine or phenylalanine in P1 position of ester substrate. The chain is Carboxypeptidase Y homolog A (cpyA) from Trichophyton verrucosum (strain HKI 0517).